The following is a 174-amino-acid chain: Protein-export protein SecB (174 aa).

It belongs to the SecB family. Homotetramer, a dimer of dimers. One homotetramer interacts with 1 SecA dimer.

It is found in the cytoplasm. In terms of biological role, one of the proteins required for the normal export of preproteins out of the cell cytoplasm. It is a molecular chaperone that binds to a subset of precursor proteins, maintaining them in a translocation-competent state. It also specifically binds to its receptor SecA. The protein is Protein-export protein SecB of Ehrlichia ruminantium (strain Gardel).